A 267-amino-acid polypeptide reads, in one-letter code: 4-hydroxy-tetrahydrodipicolinate reductase (267 aa).

NAD(+) is bound by residues 8–13 and E34; that span reads GAGGRM. Residue R35 participates in NADP(+) binding. Residues 98-100 and 122-125 each bind NAD(+); these read GTT and APNM. The Proton donor/acceptor role is filled by H155. H156 lines the (S)-2,3,4,5-tetrahydrodipicolinate pocket. The active-site Proton donor is the K159. 165–166 contacts (S)-2,3,4,5-tetrahydrodipicolinate; it reads GT.

This sequence belongs to the DapB family.

The protein resides in the cytoplasm. The catalysed reaction is (S)-2,3,4,5-tetrahydrodipicolinate + NAD(+) + H2O = (2S,4S)-4-hydroxy-2,3,4,5-tetrahydrodipicolinate + NADH + H(+). It catalyses the reaction (S)-2,3,4,5-tetrahydrodipicolinate + NADP(+) + H2O = (2S,4S)-4-hydroxy-2,3,4,5-tetrahydrodipicolinate + NADPH + H(+). It functions in the pathway amino-acid biosynthesis; L-lysine biosynthesis via DAP pathway; (S)-tetrahydrodipicolinate from L-aspartate: step 4/4. Catalyzes the conversion of 4-hydroxy-tetrahydrodipicolinate (HTPA) to tetrahydrodipicolinate. In Thioalkalivibrio sulfidiphilus (strain HL-EbGR7), this protein is 4-hydroxy-tetrahydrodipicolinate reductase.